Here is a 434-residue protein sequence, read N- to C-terminus: Trigger factor (434 aa).

The PPIase FKBP-type domain occupies 160–245 (GDKVKMNFVG…LTEVLAANLP (86 aa)).

It belongs to the FKBP-type PPIase family. Tig subfamily.

It localises to the cytoplasm. It carries out the reaction [protein]-peptidylproline (omega=180) = [protein]-peptidylproline (omega=0). Functionally, involved in protein export. Acts as a chaperone by maintaining the newly synthesized protein in an open conformation. Functions as a peptidyl-prolyl cis-trans isomerase. This chain is Trigger factor, found in Shewanella sp. (strain ANA-3).